The following is a 226-amino-acid chain: Leucyl/phenylalanyl-tRNA--protein transferase (226 aa).

It belongs to the L/F-transferase family.

Its subcellular location is the cytoplasm. The enzyme catalyses N-terminal L-lysyl-[protein] + L-leucyl-tRNA(Leu) = N-terminal L-leucyl-L-lysyl-[protein] + tRNA(Leu) + H(+). It catalyses the reaction N-terminal L-arginyl-[protein] + L-leucyl-tRNA(Leu) = N-terminal L-leucyl-L-arginyl-[protein] + tRNA(Leu) + H(+). The catalysed reaction is L-phenylalanyl-tRNA(Phe) + an N-terminal L-alpha-aminoacyl-[protein] = an N-terminal L-phenylalanyl-L-alpha-aminoacyl-[protein] + tRNA(Phe). Functionally, functions in the N-end rule pathway of protein degradation where it conjugates Leu, Phe and, less efficiently, Met from aminoacyl-tRNAs to the N-termini of proteins containing an N-terminal arginine or lysine. In Pseudomonas fluorescens (strain SBW25), this protein is Leucyl/phenylalanyl-tRNA--protein transferase.